The chain runs to 184 residues: UPF0316 protein YebE (184 aa).

A run of 3 helical transmembrane segments spans residues 9–29, 41–61, and 67–87; these read GIAM…FFTI, LAAG…SLVL, and IQNV…GMKI.

This sequence belongs to the UPF0316 family.

It is found in the cell membrane. The sequence is that of UPF0316 protein YebE (yebE) from Bacillus subtilis (strain 168).